The chain runs to 580 residues: Arginine--tRNA ligase (580 aa).

The 'HIGH' region signature appears at 131 to 141; sequence ANPTGPMHVGH.

Belongs to the class-I aminoacyl-tRNA synthetase family. In terms of assembly, monomer.

The protein resides in the cytoplasm. It catalyses the reaction tRNA(Arg) + L-arginine + ATP = L-arginyl-tRNA(Arg) + AMP + diphosphate. The chain is Arginine--tRNA ligase from Cereibacter sphaeroides (strain ATCC 17025 / ATH 2.4.3) (Rhodobacter sphaeroides).